The following is a 330-amino-acid chain: Anthranilate phosphoribosyltransferase (330 aa).

5-phospho-alpha-D-ribose 1-diphosphate contacts are provided by residues Gly79, 82–83, Thr87, 89–92, 107–115, and Ser119; these read GD, NIST, and KHGNYGVSS. Gly79 lines the anthranilate pocket. Ser91 is a binding site for Mg(2+). Residue Asn110 coordinates anthranilate. An anthranilate-binding site is contributed by Arg165. Mg(2+)-binding residues include Asp223 and Glu224.

The protein belongs to the anthranilate phosphoribosyltransferase family. As to quaternary structure, homodimer. Mg(2+) serves as cofactor.

It catalyses the reaction N-(5-phospho-beta-D-ribosyl)anthranilate + diphosphate = 5-phospho-alpha-D-ribose 1-diphosphate + anthranilate. It functions in the pathway amino-acid biosynthesis; L-tryptophan biosynthesis; L-tryptophan from chorismate: step 2/5. In terms of biological role, catalyzes the transfer of the phosphoribosyl group of 5-phosphorylribose-1-pyrophosphate (PRPP) to anthranilate to yield N-(5'-phosphoribosyl)-anthranilate (PRA). This is Anthranilate phosphoribosyltransferase from Flavobacterium psychrophilum (strain ATCC 49511 / DSM 21280 / CIP 103535 / JIP02/86).